The sequence spans 359 residues: N-acetyl-gamma-glutamyl-phosphate reductase (359 aa).

Cys-162 is a catalytic residue.

The protein belongs to the NAGSA dehydrogenase family. Type 1 subfamily.

It is found in the cytoplasm. It catalyses the reaction N-acetyl-L-glutamate 5-semialdehyde + phosphate + NADP(+) = N-acetyl-L-glutamyl 5-phosphate + NADPH + H(+). It functions in the pathway amino-acid biosynthesis; L-arginine biosynthesis; N(2)-acetyl-L-ornithine from L-glutamate: step 3/4. Catalyzes the NADPH-dependent reduction of N-acetyl-5-glutamyl phosphate to yield N-acetyl-L-glutamate 5-semialdehyde. In Prochlorococcus marinus (strain NATL1A), this protein is N-acetyl-gamma-glutamyl-phosphate reductase.